Reading from the N-terminus, the 296-residue chain is Coatomer subunit epsilon (296 aa).

The protein belongs to the COPE family. In terms of assembly, oligomeric complex that consists of at least the alpha, beta, beta', gamma, delta, epsilon and zeta subunits. Interacts with the ESCRT-0 subunit VPS27.

Its subcellular location is the cytoplasm. The protein localises to the golgi apparatus membrane. It is found in the cytoplasmic vesicle. The protein resides in the COPI-coated vesicle membrane. Functionally, the coatomer is a cytosolic protein complex that binds to dilysine motifs and reversibly associates with Golgi non-clathrin-coated vesicles, which further mediate biosynthetic protein transport from the ER, via the Golgi up to the trans Golgi network. The coatomer complex is required for budding from Golgi membranes, and is essential for the retrograde Golgi-to-ER transport of dilysine-tagged proteins. This Saccharomyces cerevisiae (strain ATCC 204508 / S288c) (Baker's yeast) protein is Coatomer subunit epsilon (SEC28).